We begin with the raw amino-acid sequence, 269 residues long: uncharacterized protein (269 aa).

In terms of domain architecture, ACT spans 14–89 (FEYEIQVNRP…KLREPRLRDR (76 aa)).

This is an uncharacterized protein from Bacillus subtilis (strain 168).